The chain runs to 439 residues: MQVKENKQLCLISLGCSKNLVDSEVMLGKLYNYTLTNDAKKADVILINTCGFIESAKQESIQTILNAAKDKKEGAILIASGCLSERYKDEIKELIPEVDIFTGVGDYDKIDILIAKKQNQFSEQVFLSEHYNARIITGSSVHAYVKISEGCNQKCSFCAIPSFKGKLQSRELDSILKEVEDLALKGYKDMTFIAQDSSSFLYDKGQKDGLIQLIRAIDKQQALKSARILYLYPSSTTLELIGAIEDSPIFQNYFDMPIQHISDSMLKKMRRNSSQAHHLKLLNAMKQVKESFIRSTIIVGHPEENESEFEELSAFLDEFRFDRLNIFAFSAEENTHAYSLEKVPKKIINARIKALNKIALKHQNHSFKALLNKPIKALVEHKEGEYFYKARDLRWAPEVDGEILINDSELTTPLKPGHYTIVPSAFKDNILLAKVLSPF.

The MTTase N-terminal domain maps to 7–119 (KQLCLISLGC…IDILIAKKQN (113 aa)). Residues Cys16, Cys50, Cys82, Cys151, Cys155, and Cys158 each coordinate [4Fe-4S] cluster. The region spanning 137 to 368 (TGSSVHAYVK…ALKHQNHSFK (232 aa)) is the Radical SAM core domain.

This sequence belongs to the methylthiotransferase family. RimO subfamily. The cofactor is [4Fe-4S] cluster.

The protein resides in the cytoplasm. The enzyme catalyses L-aspartate(89)-[ribosomal protein uS12]-hydrogen + (sulfur carrier)-SH + AH2 + 2 S-adenosyl-L-methionine = 3-methylsulfanyl-L-aspartate(89)-[ribosomal protein uS12]-hydrogen + (sulfur carrier)-H + 5'-deoxyadenosine + L-methionine + A + S-adenosyl-L-homocysteine + 2 H(+). Functionally, catalyzes the methylthiolation of an aspartic acid residue of ribosomal protein uS12. The sequence is that of Ribosomal protein uS12 methylthiotransferase RimO from Helicobacter pylori (strain J99 / ATCC 700824) (Campylobacter pylori J99).